The primary structure comprises 1240 residues: DNA-directed RNA polymerase subunit beta (1240 aa).

This sequence belongs to the RNA polymerase beta chain family. As to quaternary structure, the RNAP catalytic core consists of 2 alpha, 1 beta, 1 beta' and 1 omega subunit. When a sigma factor is associated with the core the holoenzyme is formed, which can initiate transcription.

It carries out the reaction RNA(n) + a ribonucleoside 5'-triphosphate = RNA(n+1) + diphosphate. In terms of biological role, DNA-dependent RNA polymerase catalyzes the transcription of DNA into RNA using the four ribonucleoside triphosphates as substrates. The polypeptide is DNA-directed RNA polymerase subunit beta (Phytoplasma australiense).